Reading from the N-terminus, the 3707-residue chain is Basement membrane-specific heparan sulfate proteoglycan core protein (3707 aa).

A signal peptide spans 1–21 (MGQRAVGSLLLGLLLHARLLA). Ser-65, Ser-71, and Ser-76 each carry an O-linked (Xyl...) (heparan sulfate) serine glycan. Positions 80 to 191 (QMVYFRALVN…WGFKFRRLGT (112 aa)) constitute an SEA domain. Asn-89 carries an N-linked (GlcNAc...) asparagine glycan. LDL-receptor class A domains follow at residues 195-234 (FPRV…ELNC), 281-319 (GPSA…ELGC), 320-359 (ASPP…EANC), and 360-403 (SVKQ…EFGC). 13 disulfides stabilise this stretch: Cys-199/Cys-212, Cys-206/Cys-225, Cys-219/Cys-234, Cys-285/Cys-297, Cys-292/Cys-310, Cys-304/Cys-319, Cys-325/Cys-337, Cys-332/Cys-350, Cys-344/Cys-359, Cys-368/Cys-381, Cys-375/Cys-394, Cys-388/Cys-403, and Cys-428/Cys-479. N-linked (GlcNAc...) asparagine glycosylation occurs at Asn-358. The Ig-like C2-type 1 domain occupies 404-504 (MPPQVVTPPQ…VLELVPQRGP (101 aa)). One can recognise a Laminin EGF-like 1; first part domain in the interval 521 to 530 (CFCFGVTNVC). One can recognise a Laminin IV type A 1 domain in the interval 538-730 (DQIRLSFDQP…IHGRAHSVEE (193 aa)). A glycan (N-linked (GlcNAc...) asparagine) is linked at Asn-554. The 33-residue stretch at 731–763 (CRCPIGYSGLSCESCDAHFTRVPGGPYLGTCSG) folds into the Laminin EGF-like 1; second part domain. Cystine bridges form between Cys-764–Cys-773, Cys-766–Cys-780, Cys-783–Cys-792, Cys-795–Cys-811, Cys-814–Cys-829, Cys-816–Cys-839, Cys-842–Cys-851, Cys-854–Cys-869, Cys-879–Cys-892, Cys-894–Cys-903, and Cys-906–Cys-921. 2 Laminin EGF-like domains span residues 764 to 813 (CNCN…ACRP) and 814 to 871 (CPCP…KCRP). Residues 879-923 (CDERGSLGTSGETCRCKNNVVGRLCNECSDGSFHLSKQNPDGCLK) form the Laminin EGF-like 4; truncated domain. Positions 924–933 (CFCMGVSRQC) constitute a Laminin EGF-like 5; first part domain. One can recognise a Laminin IV type A 2 domain in the interval 941 to 1125 (AQVLGASEQP…GQDSAREVEQ (185 aa)). The 33-residue stretch at 1126–1158 (CTCPPGYRGPSCQDCDTGYTRVPSGLYLGTCER) folds into the Laminin EGF-like 5; second part domain. Disulfide bonds link Cys-1159–Cys-1168, Cys-1161–Cys-1175, Cys-1178–Cys-1187, Cys-1190–Cys-1206, Cys-1209–Cys-1224, Cys-1211–Cys-1234, Cys-1237–Cys-1246, Cys-1249–Cys-1263, Cys-1275–Cys-1287, Cys-1277–Cys-1293, Cys-1295–Cys-1304, and Cys-1307–Cys-1322. Laminin EGF-like domains are found at residues 1159-1208 (CNCH…DCQP), 1209-1265 (CPCY…PCHR), and 1275-1324 (CGCD…GCLP). The region spanning 1325–1334 (CFCMGVTQQC) is the Laminin EGF-like 9; first part domain. Residues 1344 to 1529 (ISTHFAPGDF…SGPRALEVEE (186 aa)) form the Laminin IV type A 3 domain. Positions 1530–1562 (CRCPPGYVGLSCQDCAPGYTRTGSGLYLGQCEL) constitute a Laminin EGF-like 9; second part domain. 8 cysteine pairs are disulfide-bonded: Cys-1563–Cys-1572, Cys-1565–Cys-1579, Cys-1582–Cys-1591, Cys-1594–Cys-1610, Cys-1613–Cys-1628, Cys-1615–Cys-1638, Cys-1641–Cys-1650, and Cys-1653–Cys-1668. 2 Laminin EGF-like domains span residues 1563 to 1612 (CECN…DCQP) and 1613 to 1670 (CACP…RCQP). Ig-like C2-type domains follow at residues 1677-1771 (EVQI…KPIM), 1772-1865 (VTVE…STAP), 1866-1954 (VASI…GGSG), 1955-2049 (PRVQ…PAPA), 2050-2148 (SPAP…PGVV), 2149-2244 (PPIR…PAPG), 2245-2343 (LAQP…RLRS), 2344-2436 (PVIS…PPTV), 2437-2532 (SVLP…APGT), 2533-2619 (PQVQ…VESP), 2620-2720 (PYAT…GGST), 2721-2809 (PTVQ…ALPS), 2810-2895 (VLIN…LVQA), and 2896-2980 (LPQI…LQVP). The interval 1713 to 1733 (DGRPLPSSAQQRHQGSELHFP) is disordered. 3 disulfide bridges follow: Cys-1792-Cys-1839, Cys-1886-Cys-1932, and Cys-1976-Cys-2021. The segment at 2039-2061 (SPSTNSPPAPASPAPIRIESSSS) is disordered. Positions 2052 to 2061 (APIRIESSSS) are enriched in low complexity. Disulfide bonds link Cys-2073/Cys-2118, Cys-2170/Cys-2215, and Cys-2268/Cys-2313. N-linked (GlcNAc...) asparagine glycans are attached at residues Asn-2336, Asn-2394, and Asn-2427. Residues Cys-2365 and Cys-2413 are joined by a disulfide bond. Cystine bridges form between Cys-2456-Cys-2506 and Cys-2554-Cys-2599. Asn-2600 carries N-linked (GlcNAc...) asparagine glycosylation. An intrachain disulfide couples Cys-2641 to Cys-2686. Cystine bridges form between Cys-2831-Cys-2876 and Cys-2917-Cys-2962. The Laminin G-like 1 domain maps to 2984–3162 (IPYFTQTPYS…VNLTTHGISH (179 aa)). N-linked (GlcNAc...) asparagine glycans are attached at residues Asn-3098 and Asn-3154. 5 disulfide bridges follow: Cys-3137-Cys-3163, Cys-3166-Cys-3177, Cys-3171-Cys-3187, Cys-3204-Cys-3216, and Cys-3229-Cys-3238. The EGF-like domain maps to 3163–3241 (CPTCQDRPCQ…GRSGVRCEEG (79 aa)). The Laminin G-like 2 domain occupies 3245–3425 (TTPSMSGAGS…VGQCYDSSPC (181 aa)). An N-linked (GlcNAc...) asparagine glycan is attached at Asn-3385. 7 cysteine pairs are disulfide-bonded: Cys-3393-Cys-3419, Cys-3425-Cys-3436, Cys-3430-Cys-3446, Cys-3448-Cys-3457, Cys-3464-Cys-3476, Cys-3470-Cys-3481, and Cys-3483-Cys-3492. An O-linked (Xyl...) (chondroitin sulfate) serine glycan is attached at Ser-3510. One can recognise a Laminin G-like 3 domain in the interval 3518–3705 (QYGAYFYDNG…AQAGANTRPC (188 aa)). 2 residues coordinate Ca(2+): Asp-3574 and Leu-3591. The interval 3615–3617 (LRE) is mediates motor neuron attachment. 2 residues coordinate Ca(2+): Ala-3641 and Asn-3643. Cys-3671 and Cys-3705 form a disulfide bridge. Positions 3680–3707 (ARPGAPPPQPLDLQHRAQAGANTRPCPS) are disordered.

As to quaternary structure, has a strong tendency to aggregate in dimers or stellate structures. Interacts with other basement membrane components such as laminin, prolargin and collagen type IV. Interacts with COL13A1. Interacts with FGFBP1. Interacts with VWA1. Interacts (via C-terminus) with ECM1 (via C-terminus). Interacts with SVEP1. Proteolytic processing produces the C-terminal angiogenic peptide, endorepellin. This peptide can be further processed to produce the LG3 peptide. Post-translationally, O-glycosylated. Contains three heparan sulfate chains. Also contains chondroitin sulfate.

The protein localises to the secreted. Its subcellular location is the extracellular space. It localises to the extracellular matrix. It is found in the basement membrane. In terms of biological role, integral component of basement membranes. Component of the glomerular basement membrane (GBM), responsible for the fixed negative electrostatic membrane charge, and which provides a barrier which is both size- and charge-selective. It serves as an attachment substrate for cells. Plays essential roles in vascularization. Critical for normal heart development and for regulating the vascular response to injury. Also required for avascular cartilage development. Functionally, anti-angiogenic and anti-tumor peptide that inhibits endothelial cell migration, collagen-induced endothelial tube morphogenesis and blood vessel growth in the chorioallantoic membrane. Blocks endothelial cell adhesion to fibronectin and type I collagen. Anti-tumor agent in neovascularization. Interaction with its ligand, integrin alpha2/beta1, is required for the anti-angiogenic properties. Evokes a reduction in phosphorylation of receptor tyrosine kinases via alpha2/beta1 integrin-mediated activation of the tyrosine phosphatase, PTPN6. Its function is as follows. Has anti-angiogenic properties that require binding of calcium ions for full activity. In Mus musculus (Mouse), this protein is Basement membrane-specific heparan sulfate proteoglycan core protein (Hspg2).